The following is a 345-amino-acid chain: N-acetyl-gamma-glutamyl-phosphate reductase (345 aa).

Cys149 is an active-site residue.

Belongs to the NAGSA dehydrogenase family. Type 1 subfamily.

The protein localises to the cytoplasm. The enzyme catalyses N-acetyl-L-glutamate 5-semialdehyde + phosphate + NADP(+) = N-acetyl-L-glutamyl 5-phosphate + NADPH + H(+). Its pathway is amino-acid biosynthesis; L-arginine biosynthesis; N(2)-acetyl-L-ornithine from L-glutamate: step 3/4. Catalyzes the NADPH-dependent reduction of N-acetyl-5-glutamyl phosphate to yield N-acetyl-L-glutamate 5-semialdehyde. The polypeptide is N-acetyl-gamma-glutamyl-phosphate reductase (Bacillus cereus (strain 03BB102)).